The sequence spans 1063 residues: Exportin-1 (1063 aa).

One can recognise an Importin N-terminal domain in the interval 43-109 (AQSILTTLKE…KKYVVSLIIK (67 aa)). The tract at residues 1034–1063 (AEEQSNKHQMQRNIPGMLNPHELPEDMQDE) is disordered.

Belongs to the exportin family. Interacts with Clbn (via its N-terminus). Associates with the nuclear pore complex via interaction with mbo and Nup214. Interacts with target proteins containing NES sequences such as actin and dl. As to expression, high expression observed in the developing embryonic brain, hind gut and posterior spiracles shortly before dorsal closure; and in the ventral nerve cord, midgut and somatic musculature shortly after dorsal closure. Expression increases when the tissue is well developed.

The protein localises to the nucleus. It is found in the nucleus membrane. In terms of biological role, receptor for the leucine-rich nuclear export signal (NES). Binds cooperatively to the NES on its target protein and to the small GTPase Ran in its active GTP-bound form. Involved in the export of dl, RpS2 and the pre-40S ribosome from the nucleus to the cytoplasm. Plays an important role in nuclear pore assembly by mediating nucleoporin condensation and biogenesis of annulate lamellae. Required for the function or maintenance of certain tissues such as brain and gut. In Drosophila melanogaster (Fruit fly), this protein is Exportin-1.